A 456-amino-acid chain; its full sequence is PTS system sucrose-specific EIIBC component (456 aa).

One can recognise a PTS EIIB type-1 domain in the interval 4-87 (EQISRSLLPL…IQAAGISESS (84 aa)). Residue C26 is the Phosphocysteine intermediate; for EIIB activity of the active site. The 350-residue stretch at 107–456 (RLLSNIFVPI…LTLKYKTDAE (350 aa)) folds into the PTS EIIC type-1 domain. Transmembrane regions (helical) follow at residues 112–132 (IFVP…LLGM), 144–164 (ALYI…PILI), 181–201 (TLGG…AAGF), 209–229 (IEVA…AVWF), 247–267 (LILT…LLIG), 288–308 (AGWL…ITGI), 329–349 (FLLP…FAVW), 360–380 (ITLP…IFGI), 388–408 (FIAA…MHVY), and 428–448 (LLNY…LSLT).

Its subcellular location is the cell inner membrane. The enzyme catalyses N(pros)-phospho-L-histidyl-[protein](out) + sucrose = sucrose 6(G)-phosphate(in) + L-histidyl-[protein]. Its function is as follows. The phosphoenolpyruvate-dependent sugar phosphotransferase system (sugar PTS), a major carbohydrate active transport system, catalyzes the phosphorylation of incoming sugar substrates concomitantly with their translocation across the cell membrane. This system is involved in sucrose transport. The chain is PTS system sucrose-specific EIIBC component from Klebsiella pneumoniae.